Consider the following 293-residue polypeptide: Energy-coupling factor transporter ATP-binding protein EcfA2 (293 aa).

Residues 3–246 form the ABC transporter domain; it reads ITFQKVEHRY…ADELEKIGVD (244 aa). 40–47 contacts ATP; it reads GHTGSGKS.

This sequence belongs to the ABC transporter superfamily. Energy-coupling factor EcfA family. As to quaternary structure, forms a stable energy-coupling factor (ECF) transporter complex composed of 2 membrane-embedded substrate-binding proteins (S component), 2 ATP-binding proteins (A component) and 2 transmembrane proteins (T component).

The protein resides in the cell membrane. In terms of biological role, ATP-binding (A) component of a common energy-coupling factor (ECF) ABC-transporter complex. Unlike classic ABC transporters this ECF transporter provides the energy necessary to transport a number of different substrates. This chain is Energy-coupling factor transporter ATP-binding protein EcfA2, found in Bacillus cereus (strain ATCC 10987 / NRS 248).